Reading from the N-terminus, the 210-residue chain is Large ribosomal subunit protein uL3 (210 aa).

Positions 126 to 167 are disordered; sequence WGFQRGPSGHGSKNIREPGSTGNATFPGRVIKGKKMPGQKGN. The span at 156 to 167 shows a compositional bias: basic residues; sequence IKGKKMPGQKGN.

This sequence belongs to the universal ribosomal protein uL3 family. Part of the 50S ribosomal subunit. Forms a cluster with proteins L14 and L19.

Functionally, one of the primary rRNA binding proteins, it binds directly near the 3'-end of the 23S rRNA, where it nucleates assembly of the 50S subunit. This is Large ribosomal subunit protein uL3 from Syntrophobacter fumaroxidans (strain DSM 10017 / MPOB).